A 226-amino-acid chain; its full sequence is MEPIKNLPRLCRTLGYEFKNIELLTQALTHRSAANKHNERLEFLGDSILSIVISDALYHQFPKATEGDLSRMRATLVRGDTLTIIAQEFKLGDYLYLGPGELKSGGFRRESILADAVEAIIGAVYLDSDLEVCRALLLKWYAERLAEIQPGISQKDAKTLLQEHLQGFKKPLPDYQVINIEGDAHDQTFTVECRIEDLSQSVIGVASSRRKAEQIAAAQVLELLKK.

The RNase III domain occupies 7 to 129 (LPRLCRTLGY…IIGAVYLDSD (123 aa)). Glu-42 lines the Mg(2+) pocket. Asp-46 is an active-site residue. Residues Asp-115 and Glu-118 each coordinate Mg(2+). Residue Glu-118 is part of the active site. The 71-residue stretch at 156 to 226 (DAKTLLQEHL…AAQVLELLKK (71 aa)) folds into the DRBM domain.

It belongs to the ribonuclease III family. In terms of assembly, homodimer. It depends on Mg(2+) as a cofactor.

The protein resides in the cytoplasm. It catalyses the reaction Endonucleolytic cleavage to 5'-phosphomonoester.. Digests double-stranded RNA. Involved in the processing of primary rRNA transcript to yield the immediate precursors to the large and small rRNAs (23S and 16S). Processes some mRNAs, and tRNAs when they are encoded in the rRNA operon. Processes pre-crRNA and tracrRNA of type II CRISPR loci if present in the organism. The polypeptide is Ribonuclease 3 (Shewanella baltica (strain OS185)).